The following is a 438-amino-acid chain: Putative truncated GMC-type inactive oxidoreductase L894 (438 aa).

Residues 1 to 26 (MYVFLLFSRYKIFYVYIKKMAHRSRC) form the signal peptide. 79-109 (DIVIIGAGAAGCVLAYYLTKFSDLKIILLEA) is a binding site for FAD.

The protein belongs to the GMC oxidoreductase family. Requires FAD as cofactor.

It is found in the virion. The protein is Putative truncated GMC-type inactive oxidoreductase L894 of Acanthamoeba polyphaga (Amoeba).